The following is a 298-amino-acid chain: Inosose dehydratase (298 aa).

This sequence belongs to the IolE/MocC family. Glutathione is required as a cofactor. The cofactor is Co(2+). It depends on Mn(2+) as a cofactor.

The catalysed reaction is scyllo-inosose = 3D-3,5/4-trihydroxycyclohexane-1,2-dione + H2O. Functionally, catalyzes the dehydration of inosose (2-keto-myo-inositol, 2KMI or 2,4,6/3,5-pentahydroxycyclohexanone) to 3D-(3,5/4)-trihydroxycyclohexane-1,2-dione (D-2,3-diketo-4-deoxy-epi-inositol). The polypeptide is Inosose dehydratase (Glaesserella parasuis serovar 5 (strain SH0165) (Haemophilus parasuis)).